We begin with the raw amino-acid sequence, 508 residues long: Acyl-CoA-binding domain-containing protein 5 (508 aa).

In terms of domain architecture, ACB spans 44 to 133 (YETRFEAAVK…MKKIIETMPM (90 aa)). Residues 55–64 (IQSLPKNGSF), 75–79 (YSFYK), lysine 101, and tyrosine 120 contribute to the an acyl-CoA site. The tract at residues 175–215 (AKAVNGKAESSDSGAESEEEEAQEELKGAEQSGSDDKKTLK) is disordered. Residues 181 to 214 (KAESSDSGAESEEEEAQEELKGAEQSGSDDKKTL) are a coiled coil. Residues serine 184, serine 185, serine 187, serine 191, serine 206, and serine 233 each carry the phosphoserine modification. Residues 198–215 (EELKGAEQSGSDDKKTLK) are compositionally biased toward basic and acidic residues. Basic and acidic residues predominate over residues 240-260 (SDIHTDSSRSTRSSEDEKPGD). The tract at residues 240 to 300 (SDIHTDSSRS…LTSDSDSEVY (61 aa)) is disordered. Position 303 is a phosphoserine (serine 303). Disordered regions lie at residues 318-340 (PTQH…NGSI) and 353-419 (EVKH…RGSR). Residues 353–376 (EVKHGGEDGRSSSGAPHRETRGGE) are compositionally biased toward basic and acidic residues. At serine 405 the chain carries Phosphoserine. A compositionally biased stretch (basic and acidic residues) spans 408-418 (DGERWGSDRGS). Residues 428 to 453 (LVLIRLQEDMQNVLQRLHKLETLTAS) are a coiled coil. Residue lysine 446 is modified to N6-acetyllysine. The chain crosses the membrane as a helical span at residues 480-500 (GALAFAIIWPFIAQWLAHLYY).

Belongs to the ATG37 family.

The protein localises to the peroxisome membrane. Acyl-CoA binding protein which acts as the peroxisome receptor for pexophagy but is dispensable for aggrephagy and nonselective autophagy. Binds medium- and long-chain acyl-CoA esters. This chain is Acyl-CoA-binding domain-containing protein 5 (Acbd5), found in Mus musculus (Mouse).